Consider the following 305-residue polypeptide: GTPase Era (305 aa).

An Era-type G domain is found at 11–181 (RSGFVSFVGR…IKVMTDLLPE (171 aa)). Residues 19–26 (GRPNTGKS) form a G1 region. Position 19–26 (19–26 (GRPNTGKS)) interacts with GTP. Residues 45–49 (ETTRH) are G2. The segment at 66 to 69 (DTPG) is G3. GTP is bound by residues 66–70 (DTPGL) and 130–133 (TKAD). A G4 region spans residues 130 to 133 (TKAD). The interval 160-162 (VSS) is G5. One can recognise a KH type-2 domain in the interval 212 to 291 (LKNELPHSVA…FLDLRIKVLK (80 aa)).

The protein belongs to the TRAFAC class TrmE-Era-EngA-EngB-Septin-like GTPase superfamily. Era GTPase family. Monomer.

It is found in the cytoplasm. Its subcellular location is the cell membrane. Its function is as follows. An essential GTPase that binds both GDP and GTP, with rapid nucleotide exchange. Plays a role in 16S rRNA processing and 30S ribosomal subunit biogenesis and possibly also in cell cycle regulation and energy metabolism. This is GTPase Era from Corynebacterium glutamicum (strain ATCC 13032 / DSM 20300 / JCM 1318 / BCRC 11384 / CCUG 27702 / LMG 3730 / NBRC 12168 / NCIMB 10025 / NRRL B-2784 / 534).